A 384-amino-acid polypeptide reads, in one-letter code: L-aspartate decarboxylase (384 aa).

Residue Lys-231 is modified to N6-(pyridoxal phosphate)lysine.

The protein belongs to the group II decarboxylase family. MfnA subfamily. Homodimer. Can also form homohexamers. Requires pyridoxal 5'-phosphate as cofactor.

It carries out the reaction L-aspartate + H(+) = beta-alanine + CO2. Its pathway is cofactor biosynthesis; coenzyme A biosynthesis. Its activity is regulated as follows. Inhibited by hydroxylamine. Functionally, catalyzes the decarboxylation of L-aspartate to produce beta-alanine. In vitro, can also catalyze the decarboxylation of L-glutamate to produce 4-aminobutanoate, but this activity does not seem necessary in vivo. Shows much higher activity with L-aspartate than with L-glutamate. Does not decarboxylate L-tyrosine. This chain is L-aspartate decarboxylase, found in Thermococcus kodakarensis (strain ATCC BAA-918 / JCM 12380 / KOD1) (Pyrococcus kodakaraensis (strain KOD1)).